The chain runs to 368 residues: Large ribosomal subunit protein mL46 (368 aa).

Residues 53–81 (TATATTTTTLPPPHPPVTTSTGTHAATST) form a disordered region. Positions 69–81 (VTTSTGTHAATST) are enriched in low complexity.

Belongs to the mitochondrion-specific ribosomal protein mL46 family. Component of the mitochondrial large ribosomal subunit (mt-LSU). Mature N.crassa 74S mitochondrial ribosomes consist of a small (37S) and a large (54S) subunit. The 37S small subunit contains a 16S ribosomal RNA (16S mt-rRNA) and 32 different proteins. The 54S large subunit contains a 23S rRNA (23S mt-rRNA) and 42 different proteins.

Its subcellular location is the mitochondrion. In terms of biological role, component of the mitochondrial ribosome (mitoribosome), a dedicated translation machinery responsible for the synthesis of mitochondrial genome-encoded proteins, including at least some of the essential transmembrane subunits of the mitochondrial respiratory chain. The mitoribosomes are attached to the mitochondrial inner membrane and translation products are cotranslationally integrated into the membrane. This chain is Large ribosomal subunit protein mL46 (mrpl17), found in Neurospora crassa (strain ATCC 24698 / 74-OR23-1A / CBS 708.71 / DSM 1257 / FGSC 987).